Consider the following 241-residue polypeptide: Large ribosomal subunit protein uL1 (241 aa).

It belongs to the universal ribosomal protein uL1 family. In terms of assembly, part of the 50S ribosomal subunit.

In terms of biological role, binds directly to 23S rRNA. The L1 stalk is quite mobile in the ribosome, and is involved in E site tRNA release. Protein L1 is also a translational repressor protein, it controls the translation of the L11 operon by binding to its mRNA. This Streptomyces coelicolor (strain ATCC BAA-471 / A3(2) / M145) protein is Large ribosomal subunit protein uL1.